The primary structure comprises 788 residues: MPSAQTAAERIAELRSEIDAHNYRYYVLDEPSVPDAEYDRLFNELKALEAEHPELVTPESPTQRVGGAALAAFGQVRHEVPMLSLGNAFEEQDLLDFDRRVREGLDLPAGDLFGDGAVVEYSCEPKLDGLAVSLLYENGHLVRGATRGDGSTGEDISANVRTVRNIPLKLHGSGWPAVLEVRGEIYMPKAGFEALNARQLESGGKPFANPRNAAAGSLRQLDSKITASRPLELCAYGVGRSDGELPDTHIGILQALKGWGLPISRELKLAKGVAECRAYYDAIGAKRDALPYEIDGVVFKVNAVEQQRELGFRAREPRWAIAHKFPAREEITELLDVEFQVGRTGAITPVARLKPVQVAGVTVSNATLHNMDEVARLGVMIGDTVIVRRAGDVIPQILGVIAERRPTDARAVHVPEQCPVCGSAVERTQLIKRSKGRESVSEGSIYRCVGRLACQAQLKQAIIHFVSRRAMDIDGLGDKIVEQLVDKGLVRSPADLYCLTHEQVIELEGFAEISTRNLLHAIDASRKPSLARFVYALGIPDVGEETAKLLARALGSLDRIGRALPDVLVYLPDVGLEVAHEIHSFFEDEHNRTVIALLRERGVEPQEQGDVHPEFAACATLPDLLDRLNIPHIARTGAQRLAERFGSLEAIIAADWLDLRQVERLTEKAARSLRDYFDKPENAERARLIEAQLREFGMHWESERKAAEGLPLAGQTWVLTGTLETMSRDEGKARLEALGAKVAGSVSAKTTCVVAGPGAGSKLTKANELGVTVLDESQFIERLAQLGS.

NAD(+) contacts are provided by residues 35 to 39 (DAEYD), 84 to 85 (SL), and Glu124. Lys126 serves as the catalytic N6-AMP-lysine intermediate. NAD(+) contacts are provided by Arg147, Glu184, Lys300, and Lys324. 4 residues coordinate Zn(2+): Cys418, Cys421, Cys448, and Cys454. The region spanning 707–788 (AEGLPLAGQT…FIERLAQLGS (82 aa)) is the BRCT domain.

Belongs to the NAD-dependent DNA ligase family. LigA subfamily. Requires Mg(2+) as cofactor. The cofactor is Mn(2+).

It catalyses the reaction NAD(+) + (deoxyribonucleotide)n-3'-hydroxyl + 5'-phospho-(deoxyribonucleotide)m = (deoxyribonucleotide)n+m + AMP + beta-nicotinamide D-nucleotide.. Its function is as follows. DNA ligase that catalyzes the formation of phosphodiester linkages between 5'-phosphoryl and 3'-hydroxyl groups in double-stranded DNA using NAD as a coenzyme and as the energy source for the reaction. It is essential for DNA replication and repair of damaged DNA. The protein is DNA ligase of Stutzerimonas stutzeri (strain A1501) (Pseudomonas stutzeri).